The following is a 609-amino-acid chain: Tyrosyl-DNA phosphodiesterase 1 (609 aa).

Over residues 1–12 (MSQESSYGKWTI) the composition is skewed to polar residues. A disordered region spans residues 1–154 (MSQESSYGKW…EYETSGEGQD (154 aa)). S61, S119, and S132 each carry phosphoserine. A compositionally biased stretch (basic and acidic residues) spans 127 to 143 (KVEDRSPPDSHRAQRAD). Phosphothreonine is present on T148. The residue at position 149 (S149) is a Phosphoserine. The active-site Nucleophile is H264. K266 is a substrate binding site. The tract at residues 401 to 404 (SIGS) is interaction with DNA. H494 acts as the Proton donor/acceptor in catalysis. K496 serves as a coordination point for substrate.

This sequence belongs to the tyrosyl-DNA phosphodiesterase family. Monomer.

The protein resides in the nucleus. The protein localises to the cytoplasm. Its function is as follows. DNA repair enzyme that can remove a variety of covalent adducts from DNA through hydrolysis of a 3'-phosphodiester bond, giving rise to DNA with a free 3' phosphate. Catalyzes the hydrolysis of dead-end complexes between DNA and the topoisomerase I active site tyrosine residue. Hydrolyzes 3'-phosphoglycolates on protruding 3' ends on DNA double-strand breaks due to DNA damage by radiation and free radicals. Acts on blunt-ended double-strand DNA breaks and on single-stranded DNA. Has low 3'exonuclease activity and can remove a single nucleoside from the 3'end of DNA and RNA molecules with 3'hydroxyl groups. Has no exonuclease activity towards DNA or RNA with a 3'phosphate. The sequence is that of Tyrosyl-DNA phosphodiesterase 1 (Tdp1) from Rattus norvegicus (Rat).